A 393-amino-acid chain; its full sequence is Acetylornithine aminotransferase (393 aa).

Pyridoxal 5'-phosphate contacts are provided by residues 100–101 (GT) and F132. R135 serves as a coordination point for N(2)-acetyl-L-ornithine. 217–220 (DEIQ) is a pyridoxal 5'-phosphate binding site. Residue K246 is modified to N6-(pyridoxal phosphate)lysine. Residue S275 participates in N(2)-acetyl-L-ornithine binding. T276 is a pyridoxal 5'-phosphate binding site.

Belongs to the class-III pyridoxal-phosphate-dependent aminotransferase family. ArgD subfamily. In terms of assembly, homodimer. Requires pyridoxal 5'-phosphate as cofactor.

The protein resides in the cytoplasm. The catalysed reaction is N(2)-acetyl-L-ornithine + 2-oxoglutarate = N-acetyl-L-glutamate 5-semialdehyde + L-glutamate. It participates in amino-acid biosynthesis; L-arginine biosynthesis; N(2)-acetyl-L-ornithine from L-glutamate: step 4/4. The sequence is that of Acetylornithine aminotransferase from Campylobacter jejuni subsp. jejuni serotype O:2 (strain ATCC 700819 / NCTC 11168).